Reading from the N-terminus, the 37-residue chain is Cytochrome b6-f complex subunit 5 (37 aa).

Residues 5–25 traverse the membrane as a helical segment; it reads LLSGIVLGLIPITLLGLFVTA.

It belongs to the PetG family. The 4 large subunits of the cytochrome b6-f complex are cytochrome b6, subunit IV (17 kDa polypeptide, PetD), cytochrome f and the Rieske protein, while the 4 small subunits are PetG, PetL, PetM and PetN. The complex functions as a dimer.

It localises to the plastid. Its subcellular location is the chloroplast thylakoid membrane. Functionally, component of the cytochrome b6-f complex, which mediates electron transfer between photosystem II (PSII) and photosystem I (PSI), cyclic electron flow around PSI, and state transitions. PetG is required for either the stability or assembly of the cytochrome b6-f complex. The protein is Cytochrome b6-f complex subunit 5 of Marchantia polymorpha (Common liverwort).